A 172-amino-acid chain; its full sequence is Adenine phosphoribosyltransferase (172 aa).

This sequence belongs to the purine/pyrimidine phosphoribosyltransferase family. In terms of assembly, homodimer.

Its subcellular location is the cytoplasm. It carries out the reaction AMP + diphosphate = 5-phospho-alpha-D-ribose 1-diphosphate + adenine. It functions in the pathway purine metabolism; AMP biosynthesis via salvage pathway; AMP from adenine: step 1/1. Its function is as follows. Catalyzes a salvage reaction resulting in the formation of AMP, that is energically less costly than de novo synthesis. The protein is Adenine phosphoribosyltransferase of Prochlorococcus marinus (strain MIT 9313).